The following is a 116-amino-acid chain: Large ribosomal subunit protein eL31 (116 aa).

The protein belongs to the eukaryotic ribosomal protein eL31 family.

The sequence is that of Large ribosomal subunit protein eL31 (RPL31) from Chlamydomonas reinhardtii (Chlamydomonas smithii).